Consider the following 329-residue polypeptide: 4-hydroxythreonine-4-phosphate dehydrogenase (329 aa).

Substrate-binding residues include His137 and Thr138. Residues His167, His212, and His267 each contribute to the a divalent metal cation site. Substrate-binding residues include Lys275, Asn284, and Arg293.

This sequence belongs to the PdxA family. As to quaternary structure, homodimer. Zn(2+) is required as a cofactor. The cofactor is Mg(2+). It depends on Co(2+) as a cofactor.

Its subcellular location is the cytoplasm. It catalyses the reaction 4-(phosphooxy)-L-threonine + NAD(+) = 3-amino-2-oxopropyl phosphate + CO2 + NADH. Its pathway is cofactor biosynthesis; pyridoxine 5'-phosphate biosynthesis; pyridoxine 5'-phosphate from D-erythrose 4-phosphate: step 4/5. Catalyzes the NAD(P)-dependent oxidation of 4-(phosphooxy)-L-threonine (HTP) into 2-amino-3-oxo-4-(phosphooxy)butyric acid which spontaneously decarboxylates to form 3-amino-2-oxopropyl phosphate (AHAP). The chain is 4-hydroxythreonine-4-phosphate dehydrogenase from Stutzerimonas stutzeri (strain A1501) (Pseudomonas stutzeri).